The following is a 363-amino-acid chain: uncharacterized protein (363 aa).

Gly-29 to Thr-36 contacts ATP.

It belongs to the archaeal ATPase family.

This is an uncharacterized protein from Methanocaldococcus jannaschii (strain ATCC 43067 / DSM 2661 / JAL-1 / JCM 10045 / NBRC 100440) (Methanococcus jannaschii).